Reading from the N-terminus, the 220-residue chain is Large ribosomal subunit protein eL15 (220 aa).

Residues 197–207 (KKRHEASRGAR) show a composition bias toward basic and acidic residues. A disordered region spans residues 197 to 220 (KKRHEASRGARDPWQIAEKLKEEK).

The protein belongs to the eukaryotic ribosomal protein eL15 family.

This Desulfurococcus amylolyticus (strain DSM 18924 / JCM 16383 / VKM B-2413 / 1221n) (Desulfurococcus kamchatkensis) protein is Large ribosomal subunit protein eL15.